Here is a 178-residue protein sequence, read N- to C-terminus: ATP synthase subunit delta (178 aa).

Belongs to the ATPase delta chain family. As to quaternary structure, F-type ATPases have 2 components, F(1) - the catalytic core - and F(0) - the membrane proton channel. F(1) has five subunits: alpha(3), beta(3), gamma(1), delta(1), epsilon(1). F(0) has three main subunits: a(1), b(2) and c(10-14). The alpha and beta chains form an alternating ring which encloses part of the gamma chain. F(1) is attached to F(0) by a central stalk formed by the gamma and epsilon chains, while a peripheral stalk is formed by the delta and b chains.

It localises to the cell membrane. Functionally, f(1)F(0) ATP synthase produces ATP from ADP in the presence of a proton or sodium gradient. F-type ATPases consist of two structural domains, F(1) containing the extramembraneous catalytic core and F(0) containing the membrane proton channel, linked together by a central stalk and a peripheral stalk. During catalysis, ATP synthesis in the catalytic domain of F(1) is coupled via a rotary mechanism of the central stalk subunits to proton translocation. This protein is part of the stalk that links CF(0) to CF(1). It either transmits conformational changes from CF(0) to CF(1) or is implicated in proton conduction. The protein is ATP synthase subunit delta of Buchnera aphidicola subsp. Baizongia pistaciae (strain Bp).